A 139-amino-acid polypeptide reads, in one-letter code: Ribonuclease P protein component (139 aa).

Belongs to the RnpA family. Consists of a catalytic RNA component (M1 or rnpB) and a protein subunit.

It carries out the reaction Endonucleolytic cleavage of RNA, removing 5'-extranucleotides from tRNA precursor.. Functionally, RNaseP catalyzes the removal of the 5'-leader sequence from pre-tRNA to produce the mature 5'-terminus. It can also cleave other RNA substrates such as 4.5S RNA. The protein component plays an auxiliary but essential role in vivo by binding to the 5'-leader sequence and broadening the substrate specificity of the ribozyme. The polypeptide is Ribonuclease P protein component (Chlamydia felis (strain Fe/C-56) (Chlamydophila felis)).